The chain runs to 444 residues: Type VII secretion system protein EssB (444 aa).

Over methionine 1 to tryptophan 229 the chain is Cytoplasmic. Residues valine 230–phenylalanine 250 form a helical membrane-spanning segment. Over serine 251 to lysine 444 the chain is Extracellular. Positions lysine 366–lysine 444 are disordered. Positions serine 372–lysine 444 are enriched in basic and acidic residues. Residues leucine 387 to lysine 443 are a coiled coil.

This sequence belongs to the EssB family.

It is found in the cell membrane. Its function is as follows. Component of the type VII secretion system (Ess). Required for the secretion of EsxA. This Staphylococcus aureus (strain MRSA252) protein is Type VII secretion system protein EssB.